Reading from the N-terminus, the 73-residue chain is ComX pheromone (73 aa).

The propeptide occupies 1–52 (MKHIDKIISHLVNNPEAFDQFKNGNLTLLNINEKEKKAILYAFEQGEVPRTS). Tryptophan 54 carries the 3'-farnesyl-2',N2-cyclotryptophan lipid modification. A propeptide spanning residues 59 to 73 (AISNFFEDDKRKSLI) is cleaved from the precursor.

In terms of assembly, interacts directly with the sensor histidine kinase ComP and stimulates its activity. Post-translationally, trp-54 is modified by farnesylation, which is essential for activity. Modified by the tryptophan prenyltransferase ComQ before export to the extracellular environment.

Its subcellular location is the secreted. Part of a major quorum-sensing system that regulates the development of genetic competence. Acts through the activation of the two-component regulatory system ComP/ComA composed of a sensor histidine kinase, ComP, and a response regulator, ComA. Activates the expression of the genes for biosynthesis of poly-gamma-glutamic acid (gamma-PGA), which is involved in biofilm formation in B.subtilis natto. In Bacillus subtilis subsp. natto (strain BEST195), this protein is ComX pheromone.